Consider the following 528-residue polypeptide: Phosphoenolpyruvate carboxykinase (ATP) (528 aa).

Substrate is bound by residues arginine 54, tyrosine 190, and lysine 196. ATP is bound by residues lysine 196, histidine 215, and 231-239; that span reads GLSGTGKTT. 2 residues coordinate Mn(2+): lysine 196 and histidine 215. Aspartate 252 is a Mn(2+) binding site. ATP is bound by residues glutamate 280, arginine 316, and threonine 441. Arginine 316 is a binding site for substrate.

This sequence belongs to the phosphoenolpyruvate carboxykinase (ATP) family. Mn(2+) serves as cofactor.

The protein resides in the cytoplasm. The catalysed reaction is oxaloacetate + ATP = phosphoenolpyruvate + ADP + CO2. It functions in the pathway carbohydrate biosynthesis; gluconeogenesis. Its function is as follows. Involved in the gluconeogenesis. Catalyzes the conversion of oxaloacetate (OAA) to phosphoenolpyruvate (PEP) through direct phosphoryl transfer between the nucleoside triphosphate and OAA. In Sulfurimonas denitrificans (strain ATCC 33889 / DSM 1251) (Thiomicrospira denitrificans (strain ATCC 33889 / DSM 1251)), this protein is Phosphoenolpyruvate carboxykinase (ATP).